A 903-amino-acid chain; its full sequence is Translation initiation factor IF-2 (903 aa).

The tract at residues 66 to 296 (QATLKGEGPV…GRSRKREMEN (231 aa)) is disordered. The segment covering 121–132 (NTDETRVQEHKP) has biased composition (basic and acidic residues). 2 stretches are compositionally biased toward low complexity: residues 139–152 (AGDA…AAAG) and 178–195 (AATG…GQQS). Over residues 204-231 (EGRSRQDENKGSAREDQANRFATRDKEA) the composition is skewed to basic and acidic residues. Positions 246–255 (RRPAHSKPLR) are enriched in basic residues. Basic and acidic residues-rich tracts occupy residues 263–276 (VTKD…DRSN) and 285–296 (ESGRSRKREMEN). The region spanning 403 to 572 (ERPPVVTVMG…LLTADVAELK (170 aa)) is the tr-type G domain. Positions 412–419 (GHVDHGKT) are G1. Residue 412–419 (GHVDHGKT) coordinates GTP. The interval 437-441 (GITQH) is G2. Residues 458–461 (DTPG) form a G3 region. Residues 458–462 (DTPGH) and 512–515 (NKID) contribute to the GTP site. The interval 512 to 515 (NKID) is G4. A G5 region spans residues 548 to 550 (SAV).

Belongs to the TRAFAC class translation factor GTPase superfamily. Classic translation factor GTPase family. IF-2 subfamily.

It localises to the cytoplasm. Its function is as follows. One of the essential components for the initiation of protein synthesis. Protects formylmethionyl-tRNA from spontaneous hydrolysis and promotes its binding to the 30S ribosomal subunits. Also involved in the hydrolysis of GTP during the formation of the 70S ribosomal complex. In Moorella thermoacetica (strain ATCC 39073 / JCM 9320), this protein is Translation initiation factor IF-2.